A 166-amino-acid chain; its full sequence is Small ribosomal subunit protein uS5 (166 aa).

In terms of domain architecture, S5 DRBM spans 11-74; that stretch reads LVEKLVAVDR…EAARRNMITV (64 aa).

Belongs to the universal ribosomal protein uS5 family. As to quaternary structure, part of the 30S ribosomal subunit. Contacts proteins S4 and S8.

Its function is as follows. With S4 and S12 plays an important role in translational accuracy. In terms of biological role, located at the back of the 30S subunit body where it stabilizes the conformation of the head with respect to the body. The polypeptide is Small ribosomal subunit protein uS5 (Acinetobacter baumannii (strain ATCC 17978 / DSM 105126 / CIP 53.77 / LMG 1025 / NCDC KC755 / 5377)).